The chain runs to 549 residues: Chaperonin GroEL (549 aa).

ATP is bound by residues 30-33 (TLGP), lysine 51, 87-91 (DGTTT), glycine 415, 479-481 (NAA), and aspartate 495.

The protein belongs to the chaperonin (HSP60) family. Forms a cylinder of 14 subunits composed of two heptameric rings stacked back-to-back. Interacts with the co-chaperonin GroES.

Its subcellular location is the cytoplasm. It catalyses the reaction ATP + H2O + a folded polypeptide = ADP + phosphate + an unfolded polypeptide.. In terms of biological role, together with its co-chaperonin GroES, plays an essential role in assisting protein folding. The GroEL-GroES system forms a nano-cage that allows encapsulation of the non-native substrate proteins and provides a physical environment optimized to promote and accelerate protein folding. This is Chaperonin GroEL from Leptothrix cholodnii (strain ATCC 51168 / LMG 8142 / SP-6) (Leptothrix discophora (strain SP-6)).